The sequence spans 130 residues: Glycine cleavage system H protein (130 aa).

Positions 25 to 106 constitute a Lipoyl-binding domain; the sequence is VALIGITDFA…PFDTWMVKLK (82 aa). The residue at position 66 (K66) is an N6-lipoyllysine.

This sequence belongs to the GcvH family. As to quaternary structure, the glycine cleavage system is composed of four proteins: P, T, L and H. Requires (R)-lipoate as cofactor.

The glycine cleavage system catalyzes the degradation of glycine. The H protein shuttles the methylamine group of glycine from the P protein to the T protein. The sequence is that of Glycine cleavage system H protein from Leptospira biflexa serovar Patoc (strain Patoc 1 / Ames).